Consider the following 78-residue polypeptide: MSTIEERVKKIVAEQLGVKEDEVTNEKSFVDDLGADSLDTVELVMALEEEFETEIPDEEAEKITTVQAAIDYVNSHQG.

The region spanning 2–77 is the Carrier domain; the sequence is STIEERVKKI…AAIDYVNSHQ (76 aa). Ser-37 is modified (O-(pantetheine 4'-phosphoryl)serine).

Belongs to the acyl carrier protein (ACP) family. In terms of processing, 4'-phosphopantetheine is transferred from CoA to a specific serine of apo-ACP by AcpS. This modification is essential for activity because fatty acids are bound in thioester linkage to the sulfhydryl of the prosthetic group.

The protein localises to the cytoplasm. Its pathway is lipid metabolism; fatty acid biosynthesis. In terms of biological role, carrier of the growing fatty acid chain in fatty acid biosynthesis. This is Acyl carrier protein from Pseudomonas putida (strain W619).